The chain runs to 295 residues: Acetyl-coenzyme A carboxylase carboxyl transferase subunit beta (295 aa).

Residues 1 to 20 form a disordered region; it reads MSWLSKLMPSGIRTENTPAK. In terms of domain architecture, CoA carboxyltransferase N-terminal spans 28 to 295; the sequence is LWEKCSNCGS…QPHPQDADAA (268 aa). Cysteine 32, cysteine 35, cysteine 51, and cysteine 54 together coordinate Zn(2+). A C4-type zinc finger spans residues 32–54; that stretch reads CSNCGSALYGPELEENLEVCPKC.

This sequence belongs to the AccD/PCCB family. As to quaternary structure, acetyl-CoA carboxylase is a heterohexamer composed of biotin carboxyl carrier protein (AccB), biotin carboxylase (AccC) and two subunits each of ACCase subunit alpha (AccA) and ACCase subunit beta (AccD). Zn(2+) is required as a cofactor.

It localises to the cytoplasm. It catalyses the reaction N(6)-carboxybiotinyl-L-lysyl-[protein] + acetyl-CoA = N(6)-biotinyl-L-lysyl-[protein] + malonyl-CoA. The protein operates within lipid metabolism; malonyl-CoA biosynthesis; malonyl-CoA from acetyl-CoA: step 1/1. In terms of biological role, component of the acetyl coenzyme A carboxylase (ACC) complex. Biotin carboxylase (BC) catalyzes the carboxylation of biotin on its carrier protein (BCCP) and then the CO(2) group is transferred by the transcarboxylase to acetyl-CoA to form malonyl-CoA. The sequence is that of Acetyl-coenzyme A carboxylase carboxyl transferase subunit beta from Xanthomonas euvesicatoria pv. vesicatoria (strain 85-10) (Xanthomonas campestris pv. vesicatoria).